Consider the following 149-residue polypeptide: MAEKLSEQQIAEFKEAFSLFDKDSDGKITTKELGTVMRSLGQNPSESELTDMINEVDVNSDGSIDFPEFLTMMARKMKDTDSEAEIAEAFKVFDRNGDGKISAAELRHLLTSIGEKLSDADVDQMIKEADTNNDGEIDIQEFTSLLAAK.

4 EF-hand domains span residues 8-43 (QQIA…LGQN), 44-79 (PSES…KMKD), 81-116 (DSEA…IGEK), and 117-149 (LSDA…LAAK). Aspartate 21, aspartate 23, aspartate 25, lysine 27, glutamate 32, aspartate 57, asparagine 59, aspartate 61, serine 63, glutamate 68, aspartate 94, asparagine 96, aspartate 98, lysine 100, glutamate 105, aspartate 130, asparagine 132, aspartate 134, glutamate 136, and glutamate 141 together coordinate Ca(2+).

Belongs to the calmodulin family.

In terms of biological role, calmodulin mediates the control of a large number of enzymes, ion channels and other proteins by Ca(2+). Among the enzymes to be stimulated by the calmodulin-Ca(2+) complex are a number of protein kinases and phosphatases. In Candida albicans (Yeast), this protein is Calmodulin (CMD1).